The following is a 572-amino-acid chain: Dihydroxy-acid dehydratase (572 aa).

Cys-57 contacts [2Fe-2S] cluster. Asp-89 contributes to the Mg(2+) binding site. Residue Cys-130 participates in [2Fe-2S] cluster binding. The Mg(2+) site is built by Asp-131 and Lys-132. Lys-132 carries the post-translational modification N6-carboxylysine. Position 202 (Cys-202) interacts with [2Fe-2S] cluster. Position 453 (Glu-453) interacts with Mg(2+). The active-site Proton acceptor is Ser-479.

The protein belongs to the IlvD/Edd family. As to quaternary structure, homodimer. The cofactor is [2Fe-2S] cluster. Requires Mg(2+) as cofactor.

It catalyses the reaction (2R)-2,3-dihydroxy-3-methylbutanoate = 3-methyl-2-oxobutanoate + H2O. The enzyme catalyses (2R,3R)-2,3-dihydroxy-3-methylpentanoate = (S)-3-methyl-2-oxopentanoate + H2O. It functions in the pathway amino-acid biosynthesis; L-isoleucine biosynthesis; L-isoleucine from 2-oxobutanoate: step 3/4. Its pathway is amino-acid biosynthesis; L-valine biosynthesis; L-valine from pyruvate: step 3/4. In terms of biological role, functions in the biosynthesis of branched-chain amino acids. Catalyzes the dehydration of (2R,3R)-2,3-dihydroxy-3-methylpentanoate (2,3-dihydroxy-3-methylvalerate) into 2-oxo-3-methylpentanoate (2-oxo-3-methylvalerate) and of (2R)-2,3-dihydroxy-3-methylbutanoate (2,3-dihydroxyisovalerate) into 2-oxo-3-methylbutanoate (2-oxoisovalerate), the penultimate precursor to L-isoleucine and L-valine, respectively. This is Dihydroxy-acid dehydratase from Streptococcus thermophilus (strain CNRZ 1066).